The primary structure comprises 263 residues: MTPIKVVVHGASGKMGQEVLKTLCQENNFHPVGAVDIRAESPAMALPDGSGSIPYSADLSSILSQTKPDVMVDFTVAKASMPAIRIAAAHKVNLVIGTTGFSPEEISEIEQLAKTNDIGIILAPNFALGAIIMVHLAQVASRFLSSAEVIELHHDKKLDSPSGTALVTVASMLEARGEAFNKPPKENLTDARGQEHDGIRVHSVRLPGLLAHQEVIFGAAGQTLTIRHDAFSRECYMPGVLLAIKEIVHTKGFVFGLDKLLKL.

Position 10 to 15 (10 to 15 (GASGKM)) interacts with NAD(+). Residue arginine 38 participates in NADP(+) binding. NAD(+)-binding positions include 97 to 99 (GTT) and 123 to 126 (APNF). Histidine 153 serves as the catalytic Proton donor/acceptor. (S)-2,3,4,5-tetrahydrodipicolinate is bound at residue histidine 154. The active-site Proton donor is lysine 157. 163 to 164 (GT) lines the (S)-2,3,4,5-tetrahydrodipicolinate pocket.

Belongs to the DapB family.

Its subcellular location is the cytoplasm. The enzyme catalyses (S)-2,3,4,5-tetrahydrodipicolinate + NAD(+) + H2O = (2S,4S)-4-hydroxy-2,3,4,5-tetrahydrodipicolinate + NADH + H(+). It carries out the reaction (S)-2,3,4,5-tetrahydrodipicolinate + NADP(+) + H2O = (2S,4S)-4-hydroxy-2,3,4,5-tetrahydrodipicolinate + NADPH + H(+). It participates in amino-acid biosynthesis; L-lysine biosynthesis via DAP pathway; (S)-tetrahydrodipicolinate from L-aspartate: step 4/4. Catalyzes the conversion of 4-hydroxy-tetrahydrodipicolinate (HTPA) to tetrahydrodipicolinate. The sequence is that of 4-hydroxy-tetrahydrodipicolinate reductase from Dehalococcoides mccartyi (strain CBDB1).